The primary structure comprises 217 residues: Proteasome subunit beta (217 aa).

The propeptide at 1–14 is removed in mature form; by autocatalysis; sequence MIANNDQYKEYMKG. Threonine 15 (nucleophile) is an active-site residue.

This sequence belongs to the peptidase T1B family. As to quaternary structure, the 20S proteasome core is composed of 14 alpha and 14 beta subunits that assemble into four stacked heptameric rings, resulting in a barrel-shaped structure. The two inner rings, each composed of seven catalytic beta subunits, are sandwiched by two outer rings, each composed of seven alpha subunits. The catalytic chamber with the active sites is on the inside of the barrel. Has a gated structure, the ends of the cylinder being occluded by the N-termini of the alpha-subunits. Is capped at one or both ends by the proteasome regulatory ATPase, PAN.

It is found in the cytoplasm. The catalysed reaction is Cleavage of peptide bonds with very broad specificity.. With respect to regulation, the formation of the proteasomal ATPase PAN-20S proteasome complex, via the docking of the C-termini of PAN into the intersubunit pockets in the alpha-rings, triggers opening of the gate for substrate entry. Interconversion between the open-gate and close-gate conformations leads to a dynamic regulation of the 20S proteasome proteolysis activity. Component of the proteasome core, a large protease complex with broad specificity involved in protein degradation. The protein is Proteasome subunit beta of Methanococcus aeolicus (strain ATCC BAA-1280 / DSM 17508 / OCM 812 / Nankai-3).